A 398-amino-acid chain; its full sequence is MAIISETSDDGSHGGVPNKKPEELHKNPKEDDHQEEEVENHPPIPRQIPQALIRRTVALIKRCHYPSLSLLSKAFRIVISSPELHQTRSSLNLTEPVLYALIGFPPHSFPNWFILNHNITRNIPLRLSAIGSLPPMNPGSAVVTIGYKMYVIGGLIGPNNPVKTVFVIDCRVHTCNYLPTMHRARYRAVAEVINGKIYVIGGCEKRYDDWIEVFDVVTGIWSTVPDRSHFMSSLPGGGFVTSVVMQNKIYILDATCGLVYDPIDGTWESGELGTTLKSYWYKPCCVIEDLLYSFDPYCLQGSPINVYDPNVMVWTPMMGTGIRAFPDLDYFECKMANFGGKLMVFGATYNNPVTDTWCIEMALIKGETGPILGMIDSMVPVLRSVYSPYIDLCRSVTF.

Positions 1-46 are disordered; sequence MAIISETSDDGSHGGVPNKKPEELHKNPKEDDHQEEEVENHPPIPR. Positions 19–32 are enriched in basic and acidic residues; sequence KKPEELHKNPKEDD. The F-box domain maps to 43–90; it reads PIPRQIPQALIRRTVALIKRCHYPSLSLLSKAFRIVISSPELHQTRSS. 4 Kelch repeats span residues 148-195, 196-241, 243-289, and 295-342; these read KMYV…VING, KIYV…GFVT, VVMQ…VIED, and DPYC…GGKL.

This Arabidopsis thaliana (Mouse-ear cress) protein is Putative F-box/kelch-repeat protein At2g29780.